Reading from the N-terminus, the 189-residue chain is Elongation factor P 2 (189 aa).

It belongs to the elongation factor P family.

It is found in the cytoplasm. Its pathway is protein biosynthesis; polypeptide chain elongation. Its function is as follows. Involved in peptide bond synthesis. Stimulates efficient translation and peptide-bond synthesis on native or reconstituted 70S ribosomes in vitro. Probably functions indirectly by altering the affinity of the ribosome for aminoacyl-tRNA, thus increasing their reactivity as acceptors for peptidyl transferase. This is Elongation factor P 2 from Lactobacillus acidophilus (strain ATCC 700396 / NCK56 / N2 / NCFM).